Here is a 200-residue protein sequence, read N- to C-terminus: MELMVKGANALTVSETTFGREFNEALVHQVVVAYAAGARQGTRAQKTRSEVSGGGAKPWRQKGTGRARAGTIRSPIWRTGGVTFAAKPQDHSQKVNKKMYRGAMKSILSELVRQERLIVVENFSVEAPKTKALVAKLKELELNDVLIVTGEVDENLFLAARNLYKVDVRDVTGIDPVSLIAFDKVLMTAAAVKQVEEMLA.

The interval 42 to 65 is disordered; that stretch reads TRAQKTRSEVSGGGAKPWRQKGTG.

It belongs to the universal ribosomal protein uL4 family. In terms of assembly, part of the 50S ribosomal subunit.

One of the primary rRNA binding proteins, this protein initially binds near the 5'-end of the 23S rRNA. It is important during the early stages of 50S assembly. It makes multiple contacts with different domains of the 23S rRNA in the assembled 50S subunit and ribosome. Its function is as follows. Forms part of the polypeptide exit tunnel. The polypeptide is Large ribosomal subunit protein uL4 (Vibrio cholerae serotype O1 (strain ATCC 39541 / Classical Ogawa 395 / O395)).